The sequence spans 172 residues: NADH-ubiquinone oxidoreductase chain 6 (172 aa).

5 helical membrane passes run methionine 1 to serine 21, tyrosine 27 to glycine 47, valine 48 to valine 68, valine 87 to phenylalanine 107, and cysteine 138 to leucine 158.

Belongs to the complex I subunit 6 family.

Its subcellular location is the mitochondrion membrane. It carries out the reaction a ubiquinone + NADH + 5 H(+)(in) = a ubiquinol + NAD(+) + 4 H(+)(out). Core subunit of the mitochondrial membrane respiratory chain NADH dehydrogenase (Complex I) that is believed to belong to the minimal assembly required for catalysis. Complex I functions in the transfer of electrons from NADH to the respiratory chain. The immediate electron acceptor for the enzyme is believed to be ubiquinone. The protein is NADH-ubiquinone oxidoreductase chain 6 (MT-ND6) of Uria lomvia (Thick-billed murre).